Here is a 116-residue protein sequence, read N- to C-terminus: Large ribosomal subunit protein bL17 (116 aa).

It belongs to the bacterial ribosomal protein bL17 family. As to quaternary structure, part of the 50S ribosomal subunit. Contacts protein L32.

The protein is Large ribosomal subunit protein bL17 of Nostoc punctiforme (strain ATCC 29133 / PCC 73102).